We begin with the raw amino-acid sequence, 239 residues long: Ribonuclease 3 (239 aa).

An RNase III domain is found at 11–133 (HAAIQKKLGY…MFAAVSFDAD (123 aa)). Glu-46 lines the Mg(2+) pocket. The active site involves Asp-50. Residues Asp-119 and Glu-122 each coordinate Mg(2+). Glu-122 is an active-site residue. Residues 160–230 (DGKTALQEAL…AKEALKWLEE (71 aa)) form the DRBM domain.

Belongs to the ribonuclease III family. As to quaternary structure, homodimer. Mg(2+) serves as cofactor.

It localises to the cytoplasm. The enzyme catalyses Endonucleolytic cleavage to 5'-phosphomonoester.. Its function is as follows. Digests double-stranded RNA. Involved in the processing of primary rRNA transcript to yield the immediate precursors to the large and small rRNAs (23S and 16S). Also processes some mRNAs, and tRNAs when they are encoded in the rRNA operon. In terms of biological role, CRISPR (clustered regularly interspaced short palindromic repeat) is an adaptive immune system that provides protection against mobile genetic elements (viruses, transposable elements and conjugative plasmids). CRISPR clusters contain spacers, sequences complementary to antecedent mobile elements, and target invading nucleic acids. CRISPR clusters are transcribed and processed into CRISPR RNA (crRNA). In this organism endogenous ribonuclease 3 and Cas9 are required for correct coprocessing of pre-crRNA and the trans-encoded small RNA (tracrRNA). Cas9, crRNA and tracrRNA are required for cleavage of invading DNA. Complements pre-crRNA and tracrRNA coprocessing defects in an rnc deletion in S.pyogenes strain 370. This chain is Ribonuclease 3, found in Neisseria meningitidis serogroup A / serotype 4A (strain DSM 15465 / Z2491).